A 327-amino-acid chain; its full sequence is Pectate lyase A (327 aa).

An N-terminal signal peptide occupies residues 1–19 (MQNLKFLIAAVSCLGPALA). N99 carries an N-linked (GlcNAc...) asparagine glycan. Positions 140, 169, and 173 each coordinate Ca(2+). R226 is an active-site residue.

Belongs to the polysaccharide lyase 1 family. It depends on Ca(2+) as a cofactor.

It localises to the secreted. The catalysed reaction is Eliminative cleavage of (1-&gt;4)-alpha-D-galacturonan to give oligosaccharides with 4-deoxy-alpha-D-galact-4-enuronosyl groups at their non-reducing ends.. In terms of biological role, pectinolytic enzyme consist of four classes of enzymes: pectin lyase, polygalacturonase, pectin methylesterase and rhamnogalacturonase. Among pectinolytic enzymes, pectin lyase is the most important in depolymerization of pectin, since it cleaves internal glycosidic bonds of highly methylated pectins. Favors pectate, the anion, over pectin, the methyl ester. This chain is Pectate lyase A (plyA), found in Emericella nidulans (strain FGSC A4 / ATCC 38163 / CBS 112.46 / NRRL 194 / M139) (Aspergillus nidulans).